The following is a 513-amino-acid chain: MAVSPTTMAAVRASGAVPNAEFLLSAEGVRKEFPGVVALDDVQFRLKRASVHALMGENGAGKSTLMKILAGIYTPDKGDIRLKGVEIQLKSPLDALENGIAMIHQELNLMPFMTVAENIWIRREPKNRFGFIDHGVMHSMTEELFARLNIDIDPDIEVRHLSVANRQMVEIAKAVSYNSDVLIMDEPTSALTEREVEHLFRIIRDLRSQGIGIVYITHKMNELFEIADEFSVFRDGRYIGTHASTDVTRDDIIRMMVGREITQMFPKEEVPIGEIVLSVKDLCLKGVFRNVSFEVRAGEILGVAGLVGSGRSNVAETLFGVTPPSSGTVELFGKPVTISSPTEAIRHQMAFLTEDRKDTGCLLILDILENMQIAVLQDKFVKGGFVQQGALEATCEDMAKRLRVKTPNLYERVENLSGGNQQKVLIGRWLLTHPKILILDEPTRGIDVGAKAEIHRLVTEMARNGVAVIMISSEMPEVLGMSDRIMVMHEGLVTGFLNRDEATQIKVMELAAR.

ABC transporter domains follow at residues 24-260 (LSAE…VGRE) and 270-510 (VPIG…VMEL). 56–63 (GENGAGKS) provides a ligand contact to ATP.

Belongs to the ABC transporter superfamily. Carbohydrate importer 2 (CUT2) (TC 3.A.1.2) family.

The protein resides in the cell inner membrane. It carries out the reaction D-ribose(out) + ATP + H2O = D-ribose(in) + ADP + phosphate + H(+). It catalyses the reaction D-galactose(out) + ATP + H2O = D-galactose(in) + ADP + phosphate + H(+). Functionally, part of an ABC transporter complex involved in carbohydrate import. Could be involved in ribose, galactose and/or methyl galactoside import. Responsible for energy coupling to the transport system. This chain is Putative ribose/galactose/methyl galactoside import ATP-binding protein 2, found in Rhizobium etli (strain ATCC 51251 / DSM 11541 / JCM 21823 / NBRC 15573 / CFN 42).